We begin with the raw amino-acid sequence, 626 residues long: Two-component response regulator ORR24 (626 aa).

Residues 1 to 22 form a disordered region; sequence MTVEERQGRVGGHGVSGGGGGR. Residues 9 to 22 show a composition bias toward gly residues; it reads RVGGHGVSGGGGGR. The Response regulatory domain occupies 30 to 145; it reads RVLAVDDDPT…QLRTIWQHVI (116 aa). Asp-81 carries the 4-aspartylphosphate modification. The segment covering 151-162 has biased composition (basic and acidic residues); it reads DAKNRGNDDDAG. Disordered stretches follow at residues 151–215 and 400–440; these read DAKN…KKPR and LQPL…RTTN. Acidic residues predominate over residues 191–202; the sequence is NGDDGDDSDENS. The myb-like GARP DNA-binding region spans 210 to 269; that stretch reads TQKKPRVVWSVELHRKFVAAVNQLGIEKAVPKKILDLMNVENITRENVASHLQKYRLYLK. Polar residues predominate over residues 400–421; it reads LQPLESSSQQHLSRVHSSSADP.

It belongs to the ARR family. Type-B subfamily. Two-component system major event consists of a His-to-Asp phosphorelay between a sensor histidine kinase (HK) and a response regulator (RR). In plants, the His-to-Asp phosphorelay involves an additional intermediate named Histidine-containing phosphotransfer protein (HPt). This multistep phosphorelay consists of a His-Asp-His-Asp sequential transfer of a phosphate group between first a His and an Asp of the HK protein, followed by the transfer to a conserved His of the HPt protein and finally the transfer to an Asp in the receiver domain of the RR protein.

Its subcellular location is the nucleus. Transcriptional activator that binds specific DNA sequence. Functions as a response regulator involved in His-to-Asp phosphorelay signal transduction system. Phosphorylation of the Asp residue in the receiver domain activates the ability of the protein to promote the transcription of target genes. May directly activate some type-A response regulators in response to cytokinins. This Oryza sativa subsp. indica (Rice) protein is Two-component response regulator ORR24.